The sequence spans 97 residues: Sec-independent protein translocase protein TatA (97 aa).

A helical membrane pass occupies residues 1–21; that stretch reads MGFNIWSLLIILLIVALLFGT. The segment at 28–97 is disordered; sequence GGDLGGAIRG…SAEHHDRSTS (70 aa). Over residues 37 to 56 the composition is skewed to basic and acidic residues; it reads GFKESMREGEEEEAQKRADG. Low complexity predominate over residues 78-87; it reads QARESSSARQ. The segment covering 88-97 has biased composition (basic and acidic residues); the sequence is SAEHHDRSTS.

This sequence belongs to the TatA/E family. As to quaternary structure, the Tat system comprises two distinct complexes: a TatABC complex, containing multiple copies of TatA, TatB and TatC subunits, and a separate TatA complex, containing only TatA subunits. Substrates initially bind to the TatABC complex, which probably triggers association of the separate TatA complex to form the active translocon.

Its subcellular location is the cell inner membrane. Functionally, part of the twin-arginine translocation (Tat) system that transports large folded proteins containing a characteristic twin-arginine motif in their signal peptide across membranes. TatA could form the protein-conducting channel of the Tat system. The polypeptide is Sec-independent protein translocase protein TatA (Halorhodospira halophila (strain DSM 244 / SL1) (Ectothiorhodospira halophila (strain DSM 244 / SL1))).